Consider the following 148-residue polypeptide: Wound-induced proteinase inhibitor 2 (148 aa).

The first 25 residues, 1-25 (MAVHKEVNFVAYLLIVLGMFLYVDA), serve as a signal peptide directing secretion. The stretch at 26-81 (KACTRECGNLGFGICPRSEGSPLNPICINCCSGYKGCNYYNSFGKFICEGESDPKR) is one 1; trypsin-inhibitory repeat. Disulfide bonds link C28–C116, C32–C112, C40–C122, C52–C89, C55–C73, C56–C85, C62–C98, and C115–C133. The 2; chymotrypsin-inhibitory repeat unit spans residues 83–141 (NACTFNCDPNIAYSRCPRSQGKSLIYPTGCTTCCTGYKGCYYFGKDGKFVCEGESDEPK).

Belongs to the protease inhibitor I20 (potato type II proteinase inhibitor) family.

The protein localises to the secreted. In terms of biological role, potent inhibitor of both trypsin and chymotrypsin. This chain is Wound-induced proteinase inhibitor 2, found in Solanum lycopersicum (Tomato).